The primary structure comprises 353 residues: Quinolinate synthase (353 aa).

Iminosuccinate-binding residues include His-47 and Ser-68. Cys-113 is a [4Fe-4S] cluster binding site. Iminosuccinate is bound by residues 139 to 141 (YAN) and Ser-156. [4Fe-4S] cluster is bound at residue Cys-200. Residues 226–228 (HPE) and Thr-243 each bind iminosuccinate. Position 297 (Cys-297) interacts with [4Fe-4S] cluster.

Belongs to the quinolinate synthase family. Type 1 subfamily. The cofactor is [4Fe-4S] cluster.

The protein localises to the cytoplasm. The catalysed reaction is iminosuccinate + dihydroxyacetone phosphate = quinolinate + phosphate + 2 H2O + H(+). The protein operates within cofactor biosynthesis; NAD(+) biosynthesis; quinolinate from iminoaspartate: step 1/1. Its function is as follows. Catalyzes the condensation of iminoaspartate with dihydroxyacetone phosphate to form quinolinate. This is Quinolinate synthase from Yersinia pseudotuberculosis serotype O:3 (strain YPIII).